The sequence spans 138 residues: Large ribosomal subunit protein uL13 (138 aa).

This sequence belongs to the universal ribosomal protein uL13 family. Part of the 50S ribosomal subunit.

In terms of biological role, this protein is one of the early assembly proteins of the 50S ribosomal subunit, although it is not seen to bind rRNA by itself. It is important during the early stages of 50S assembly. The polypeptide is Large ribosomal subunit protein uL13 (Picrophilus torridus (strain ATCC 700027 / DSM 9790 / JCM 10055 / NBRC 100828 / KAW 2/3)).